A 720-amino-acid polypeptide reads, in one-letter code: DNA gyrase subunit B (720 aa).

A compositionally biased stretch (low complexity) spans 1 to 26; it reads MVDAMPENPAEEPTAASAAPNPEAVP. A disordered region spans residues 1–42; the sequence is MVDAMPENPAEEPTAASAAPNPEAVPDAVGQPEAPVKDRKVP. Residues 498-612 enclose the Toprim domain; that stretch reads CEVYIVEGDS…AGHVFLAQPP (115 aa). Mg(2+) contacts are provided by Glu504, Asp577, and Asp579.

It belongs to the type II topoisomerase GyrB family. Heterotetramer, composed of two GyrA and two GyrB chains. In the heterotetramer, GyrA contains the active site tyrosine that forms a transient covalent intermediate with the DNA, while GyrB binds cofactors and catalyzes ATP hydrolysis. The cofactor is Mg(2+). Requires Mn(2+) as cofactor. Ca(2+) is required as a cofactor.

Its subcellular location is the cytoplasm. It catalyses the reaction ATP-dependent breakage, passage and rejoining of double-stranded DNA.. Supercoiling activity inhibited by novobiocin and coumermycin, DNA wrapping around gyrase is not inhibited. Functionally, a type II topoisomerase that negatively supercoils DNA in an ATP-dependent manner. About 140 bp of DNA wraps around gyrase in the presence or absence of ATP, when ATP is added negative supercoils are made. A type II topoisomerase that negatively supercoils closed circular double-stranded (ds) DNA in an ATP-dependent manner to modulate DNA topology and maintain chromosomes in an underwound state. Negative supercoiling favors strand separation, and DNA replication, transcription, recombination and repair, all of which involve strand separation. Also able to catalyze the interconversion of other topological isomers of dsDNA rings, including catenanes and knotted rings. Type II topoisomerases break and join 2 DNA strands simultaneously in an ATP-dependent manner. The sequence is that of DNA gyrase subunit B from Micrococcus luteus (strain ATCC 4698 / DSM 20030 / JCM 1464 / CCM 169 / CCUG 5858 / IAM 1056 / NBRC 3333 / NCIMB 9278 / NCTC 2665 / VKM Ac-2230) (Micrococcus lysodeikticus).